Reading from the N-terminus, the 158-residue chain is Transcription antitermination protein NusB (158 aa).

A compositionally biased stretch (basic and acidic residues) spans 1–12 (MKRVEKRAEKQG). Positions 1 to 20 (MKRVEKRAEKQGRGTARKSR) are disordered.

This sequence belongs to the NusB family.

In terms of biological role, involved in transcription antitermination. Required for transcription of ribosomal RNA (rRNA) genes. Binds specifically to the boxA antiterminator sequence of the ribosomal RNA (rrn) operons. This Nitrosospira multiformis (strain ATCC 25196 / NCIMB 11849 / C 71) protein is Transcription antitermination protein NusB.